A 189-amino-acid polypeptide reads, in one-letter code: Ribosome maturation factor RimM (189 aa).

Residues 1 to 16 (MAPSCPTRSRVWSSRT) are compositionally biased toward polar residues. The tract at residues 1-21 (MAPSCPTRSRVWSSRTSPPPD) is disordered. Residues 118–189 (ENEFYWSDLI…TVEVDWGEDY (72 aa)) form the PRC barrel domain.

Belongs to the RimM family. As to quaternary structure, binds ribosomal protein uS19.

The protein resides in the cytoplasm. In terms of biological role, an accessory protein needed during the final step in the assembly of 30S ribosomal subunit, possibly for assembly of the head region. Essential for efficient processing of 16S rRNA. May be needed both before and after RbfA during the maturation of 16S rRNA. It has affinity for free ribosomal 30S subunits but not for 70S ribosomes. The polypeptide is Ribosome maturation factor RimM (Thiobacillus denitrificans (strain ATCC 25259 / T1)).